A 431-amino-acid chain; its full sequence is Glutamate-1-semialdehyde 2,1-aminomutase (431 aa).

Residue K269 is modified to N6-(pyridoxal phosphate)lysine.

Belongs to the class-III pyridoxal-phosphate-dependent aminotransferase family. HemL subfamily. In terms of assembly, homodimer. Requires pyridoxal 5'-phosphate as cofactor.

Its subcellular location is the cytoplasm. It catalyses the reaction (S)-4-amino-5-oxopentanoate = 5-aminolevulinate. The protein operates within porphyrin-containing compound metabolism; protoporphyrin-IX biosynthesis; 5-aminolevulinate from L-glutamyl-tRNA(Glu): step 2/2. Its pathway is porphyrin-containing compound metabolism; chlorophyll biosynthesis. This is Glutamate-1-semialdehyde 2,1-aminomutase from Chlorobium luteolum (strain DSM 273 / BCRC 81028 / 2530) (Pelodictyon luteolum).